Reading from the N-terminus, the 251-residue chain is Flap endonuclease Xni (251 aa).

Aspartate 104 serves as a coordination point for Mg(2+). The 90-residue stretch at 160–249 folds into the 5'-3' exonuclease domain; it reads VLPRQLPDYW…IDGNLQQLRL (90 aa). 5 residues coordinate K(+): leucine 171, alanine 172, proline 180, valine 182, and isoleucine 185. Residues 184 to 189 form an interaction with DNA region; it reads GIGPKS.

Belongs to the Xni family. Mg(2+) serves as cofactor. Requires K(+) as cofactor.

Functionally, has flap endonuclease activity. During DNA replication, flap endonucleases cleave the 5'-overhanging flap structure that is generated by displacement synthesis when DNA polymerase encounters the 5'-end of a downstream Okazaki fragment. The chain is Flap endonuclease Xni from Salmonella schwarzengrund (strain CVM19633).